The chain runs to 328 residues: Nucleotide-binding protein BL0705 (328 aa).

Residues 1–35 form a disordered region; sequence MNQQTTNRDTGEAAATNAPANSATSTSTPDNQPTP. Positions 13–29 are enriched in low complexity; that stretch reads AAATNAPANSATSTSTP. 46–53 is an ATP binding site; it reads GMSGAGRS. Residue 101–104 participates in GTP binding; it reads DVRS.

This sequence belongs to the RapZ-like family.

Functionally, displays ATPase and GTPase activities. The chain is Nucleotide-binding protein BL0705 from Bifidobacterium longum (strain NCC 2705).